A 166-amino-acid polypeptide reads, in one-letter code: MSRAEAAVVKVGIADVQVARYPDKIRTSGLGSCVGLVLYDKDKQTAGLVHVMLPDSGLSKTAELNRAKYADTAVKMTIDMLLKAGCRKFALKAKLAGGAEMFKFKMTNDLMKIGPRNVAAIKEQLSLYNIPVISEDTGGSSGRTIEFEPKSCMLHIRTVKQGETTI.

This sequence belongs to the CheD family. In terms of assembly, forms a complex with CheC.

The catalysed reaction is L-glutaminyl-[protein] + H2O = L-glutamyl-[protein] + NH4(+). Its function is as follows. Deamidates glutamine residues to glutamate on methyl-accepting chemotaxis receptors (MCPs). CheD-mediated MCP deamidation is required for productive communication of the conformational signals of the chemoreceptors to the CheA kinase. This chain is Chemoreceptor glutamine deamidase CheD, found in Bacillus velezensis (strain DSM 23117 / BGSC 10A6 / LMG 26770 / FZB42) (Bacillus amyloliquefaciens subsp. plantarum).